Consider the following 291-residue polypeptide: MATKPLSFQRLILTLHDYWSDQGCLILQPYDMEMGAGTFHPSTTLRALGPQPWKAAYVQPSRRPTDGRYGENPNRLGHYYQYQVILKPSPANLQELYLGSLERIGIDPLAHDIRFVEDDWESPTLGAWGLGWEVWCDGMEVTQFTYFQQVGGFDCKPVAGELTYGLERLAMYIQGVDRVYDLAFNDEGVTYGDVFLENERQFSAYNFEAANTDTLFKQFTQAADECRALLERDRPLPLPAYDQAIKASHIFNTLQARGVISVAERQAYIGRVRDLAKGACAAWMAHNGWEA.

Belongs to the class-II aminoacyl-tRNA synthetase family. Tetramer of two alpha and two beta subunits.

It is found in the cytoplasm. It carries out the reaction tRNA(Gly) + glycine + ATP = glycyl-tRNA(Gly) + AMP + diphosphate. This Rhizorhabdus wittichii (strain DSM 6014 / CCUG 31198 / JCM 15750 / NBRC 105917 / EY 4224 / RW1) (Sphingomonas wittichii) protein is Glycine--tRNA ligase alpha subunit.